The sequence spans 1129 residues: Ubiquitin carboxyl-terminal hydrolase 7 (1129 aa).

Residues 29-169 (EGHLALDIER…DDVIRLRCRF (141 aa)) form the MATH domain. A USP domain is found at 190 to 500 (IGLRNQGATC…SAYMLVYVRD (311 aa)). Residue C199 is the Nucleophile of the active site. Catalysis depends on H439, which acts as the Proton acceptor.

Belongs to the peptidase C19 family.

It localises to the nucleus. It catalyses the reaction Thiol-dependent hydrolysis of ester, thioester, amide, peptide and isopeptide bonds formed by the C-terminal Gly of ubiquitin (a 76-residue protein attached to proteins as an intracellular targeting signal).. Hydrolase that deubiquitinates target proteins. This chain is Ubiquitin carboxyl-terminal hydrolase 7, found in Caenorhabditis briggsae.